The following is a 743-amino-acid chain: POU domain, class 2, transcription factor 1 (743 aa).

Over residues Met-1 to Ser-11 the composition is skewed to polar residues. Disordered regions lie at residues Met-1–Pro-34, Ser-67–Ala-95, Ala-258–Ser-283, and Ser-357–Lys-381. The segment covering Ser-81–Ala-95 has biased composition (low complexity). A phosphothreonine mark is found at Thr-270 and Thr-276. A POU-specific domain is found at Glu-280–Glu-354. Ser-283 carries the post-translational modification Phosphoserine. Low complexity predominate over residues Ser-357–Pro-371. Positions Arg-379–Asn-438 form a DNA-binding region, homeobox. Ser-385 and Ser-448 each carry phosphoserine. Polar residues predominate over residues Val-494–Asn-504. Positions Val-494 to Leu-557 are disordered. The span at Thr-505–Leu-557 shows a compositional bias: low complexity.

This sequence belongs to the POU transcription factor family. Class-2 subfamily. Interacts with POU2AF1; the interaction increases POU2F1 transactivation activity. Interacts with NR3C1, AR, PGR and HCFC1. As to quaternary structure, (Microbial infection) Associates with the herpes simplex virus VP16-induced complex; binding to HCFC1 activates the viral transcriptional activator VP16 for association with POU2F1, to form a multiprotein-DNA complex responsible for activating transcription of the viral immediate early genes. In terms of assembly, (Microbial infection) Interacts with human herpesvirus 8 (KSHV) protein RTA/ORF50; this interaction enhances RTA/ORF50-mediated transactivation of several viral promoters including K-bZIP promoter. Post-translationally, phosphorylated by PRKDC. Ubiquitous. Isoform 2 is lymphocyte-specific.

It localises to the nucleus. In terms of biological role, transcription factor that binds to the octamer motif (5'-ATTTGCAT-3') and activates the promoters of the genes for some small nuclear RNAs (snRNA) and of genes such as those for histone H2B and immunoglobulins. Modulates transcription transactivation by NR3C1, AR and PGR. Its function is as follows. (Microbial infection) In case of human herpes simplex virus (HSV) infection, POU2F1 forms a multiprotein-DNA complex with the viral transactivator protein VP16 and HCFC1 thereby enabling the transcription of the viral immediate early genes. This chain is POU domain, class 2, transcription factor 1 (POU2F1), found in Homo sapiens (Human).